Consider the following 324-residue polypeptide: uncharacterized protein (324 aa).

Transmembrane regions (helical) follow at residues 34–54 (MAVLQSLNIFLGEACLWFYVL), 76–96 (VFMALPAIMDICGSTLMNVGL), 103–123 (IYQMTRGSLIIFVALFATTLL), 127–147 (IGQLQWLSLSFVVLGVAIVGY), 158–178 (PILGITAVLIGQFFLATQFTI), 198–218 (GTYGVFFVLLGMIISYYFIGS), 243–263 (YVISGVILVSIAFFNVSGLAI), 275–295 (LDIARTFGIWIIAMAMGMESF), and 297–317 (LLQFLGFVLLIYGIFTYHSII).

It is found in the membrane. This is an uncharacterized protein from Schizosaccharomyces pombe (strain 972 / ATCC 24843) (Fission yeast).